The following is a 344-amino-acid chain: tRNA N6-adenosine threonylcarbamoyltransferase (344 aa).

Positions 119 and 123 each coordinate Fe cation. Substrate contacts are provided by residues 141-145 (VVSGG), D174, G187, D191, and N280. A Fe cation-binding site is contributed by D310.

Belongs to the KAE1 / TsaD family. It depends on Fe(2+) as a cofactor.

The protein localises to the cytoplasm. The enzyme catalyses L-threonylcarbamoyladenylate + adenosine(37) in tRNA = N(6)-L-threonylcarbamoyladenosine(37) in tRNA + AMP + H(+). In terms of biological role, required for the formation of a threonylcarbamoyl group on adenosine at position 37 (t(6)A37) in tRNAs that read codons beginning with adenine. Is involved in the transfer of the threonylcarbamoyl moiety of threonylcarbamoyl-AMP (TC-AMP) to the N6 group of A37, together with TsaE and TsaB. TsaD likely plays a direct catalytic role in this reaction. The sequence is that of tRNA N6-adenosine threonylcarbamoyltransferase from Listeria innocua serovar 6a (strain ATCC BAA-680 / CLIP 11262).